Consider the following 579-residue polypeptide: Peptidoglycan D,D-transpeptidase FtsI (579 aa).

A helical transmembrane segment spans residues 15-35 (FCVIVGLLLAMVGAIVWRIVD). Ser294 (acyl-ester intermediate) is an active-site residue. The tract at residues 558–579 (DNLPTATEQQQVNAAPAKGGRG) is disordered. Polar residues predominate over residues 561–570 (PTATEQQQVN).

It belongs to the transpeptidase family. FtsI subfamily.

The protein resides in the cell inner membrane. The enzyme catalyses Preferential cleavage: (Ac)2-L-Lys-D-Ala-|-D-Ala. Also transpeptidation of peptidyl-alanyl moieties that are N-acyl substituents of D-alanine.. It participates in cell wall biogenesis; peptidoglycan biosynthesis. Catalyzes cross-linking of the peptidoglycan cell wall at the division septum. Binds penicillin. In Pseudomonas aeruginosa (strain ATCC 15692 / DSM 22644 / CIP 104116 / JCM 14847 / LMG 12228 / 1C / PRS 101 / PAO1), this protein is Peptidoglycan D,D-transpeptidase FtsI.